The following is a 1257-amino-acid chain: Putative structural protein ORF146 (1257 aa).

It belongs to the ascovirus HvAV ORF146 family.

The protein resides in the virion. The protein is Putative structural protein ORF146 of Noctuidae (owlet moths).